The sequence spans 150 residues: MSIWNKPISLEILNATSKNTLIEHLNIIYTEVTENSISATMPVCHFTHQPLGMLHGGASVVLAETLGSVAANFSVGEDAYCVGLDINANHVRAMREGLVTGTAVPLHIGVSTQVWQIEIKDEQGRLVCISRLTVAVKRSRPNQAKPVAEV.

This sequence belongs to the thioesterase PaaI family.

This is Putative esterase VC_A0580 from Vibrio cholerae serotype O1 (strain ATCC 39315 / El Tor Inaba N16961).